Reading from the N-terminus, the 261-residue chain is Thiazole synthase (261 aa).

Lys-102 acts as the Schiff-base intermediate with DXP in catalysis. 1-deoxy-D-xylulose 5-phosphate contacts are provided by residues Gly-163, 189–190 (AG), and 211–212 (NT).

The protein belongs to the ThiG family. In terms of assembly, homotetramer. Forms heterodimers with either ThiH or ThiS.

Its subcellular location is the cytoplasm. It carries out the reaction [ThiS sulfur-carrier protein]-C-terminal-Gly-aminoethanethioate + 2-iminoacetate + 1-deoxy-D-xylulose 5-phosphate = [ThiS sulfur-carrier protein]-C-terminal Gly-Gly + 2-[(2R,5Z)-2-carboxy-4-methylthiazol-5(2H)-ylidene]ethyl phosphate + 2 H2O + H(+). Its pathway is cofactor biosynthesis; thiamine diphosphate biosynthesis. Functionally, catalyzes the rearrangement of 1-deoxy-D-xylulose 5-phosphate (DXP) to produce the thiazole phosphate moiety of thiamine. Sulfur is provided by the thiocarboxylate moiety of the carrier protein ThiS. In vitro, sulfur can be provided by H(2)S. This chain is Thiazole synthase, found in Acinetobacter baumannii (strain SDF).